Consider the following 171-residue polypeptide: S-ribosylhomocysteine lyase (171 aa).

3 residues coordinate Fe cation: His54, His58, and Cys128.

This sequence belongs to the LuxS family. In terms of assembly, homodimer. The cofactor is Fe cation.

The catalysed reaction is S-(5-deoxy-D-ribos-5-yl)-L-homocysteine = (S)-4,5-dihydroxypentane-2,3-dione + L-homocysteine. Involved in the synthesis of autoinducer 2 (AI-2) which is secreted by bacteria and is used to communicate both the cell density and the metabolic potential of the environment. The regulation of gene expression in response to changes in cell density is called quorum sensing. Catalyzes the transformation of S-ribosylhomocysteine (RHC) to homocysteine (HC) and 4,5-dihydroxy-2,3-pentadione (DPD). The chain is S-ribosylhomocysteine lyase from Campylobacter curvus (strain 525.92).